Here is a 638-residue protein sequence, read N- to C-terminus: DEAD-box ATP-dependent RNA helicase 52B (638 aa).

Composition is skewed to low complexity over residues 1–21 and 40–67; these read MRSSWADSAANAEESAPAAAA and GQAAPAAPAQAGALPSAAAAAQPSVGQP. The interval 1–129 is disordered; that stretch reads MRSSWADSAA…WDRRDREPDP (129 aa). The segment covering 79–112 has biased composition (gly residues); that stretch reads VNGGGGGGGGSVGGSRQGFGAGGRGGGGGGGGGA. The span at 119–128 shows a compositional bias: basic and acidic residues; sequence GWDRRDREPD. The Q motif motif lies at 169–197; it reads NTFAEIDLGDALNENIRRCKYVKPTPVQR. One can recognise a Helicase ATP-binding domain in the interval 200–384; the sequence is IPISIAGRDL…SDFLADYIFL (185 aa). Position 213–220 (213–220) interacts with ATP; that stretch reads AQTGSGKT. The short motif at 328–331 is the DEAD box element; that stretch reads DEAD. The 152-residue stretch at 411–562 folds into the Helicase C-terminal domain; it reads YLMDLLHAQR…EVPQWLERYA (152 aa). The segment at 565–638 is disordered; the sequence is SSFGGGGGRN…GGQGFSSAWD (74 aa). Over residues 567-583 the composition is skewed to gly residues; that stretch reads FGGGGGRNRRSGGGARF. The span at 584–593 shows a compositional bias: basic and acidic residues; the sequence is GGRDFRRDRG. Over residues 594 to 632 the composition is skewed to gly residues; the sequence is SGGGGYGGGGGGYGGGGYGGGGGGGGYGGGSSYGGGGQG.

Belongs to the DEAD box helicase family. DDX3/DED1 subfamily.

The catalysed reaction is ATP + H2O = ADP + phosphate + H(+). The sequence is that of DEAD-box ATP-dependent RNA helicase 52B (PL10B) from Oryza sativa subsp. japonica (Rice).